We begin with the raw amino-acid sequence, 144 residues long: Large ribosomal subunit protein uL15 (144 aa).

The interval 1 to 52 (MRLNTLSPAEGAKHSAKRLGRGIGSGLGKTGGRGHKGQKSRTGSGVRRGFEG) is disordered. The segment covering 21 to 31 (RGIGSGLGKTG) has biased composition (gly residues).

This sequence belongs to the universal ribosomal protein uL15 family. In terms of assembly, part of the 50S ribosomal subunit.

Binds to the 23S rRNA. The polypeptide is Large ribosomal subunit protein uL15 (Haemophilus influenzae (strain 86-028NP)).